The primary structure comprises 234 residues: Zinc finger BED domain-containing protein 3 (234 aa).

The disordered stretch occupies residues 19 to 42; the sequence is AAARGGQCPGLGPAPTPTPPGRLG. The segment at 43–104 adopts a BED-type zinc-finger fold; that stretch reads APYSEAWGYF…SAHRRELESS (62 aa). Residues Cys-69, Cys-72, His-92, and His-97 each coordinate Zn(2+). 2 disordered regions span residues 94–126 and 202–225; these read RSAH…AAPE and REGA…GDRD. Over residues 111-122 the composition is skewed to pro residues; that stretch reads PAAPCPPPPGPA. A compositionally biased stretch (basic and acidic residues) spans 216-225; that stretch reads LKDDPEGDRD.

In terms of assembly, associates with the subcortical maternal complex (SCMC) composed of at least NLRP5, KHDC3L, OOEP, and TLE6 via interaction with NLRP5 and TLE6. Interacts with AXIN1; the interaction is direct, enhanced by protein kinase GSK3B and casein kinase CSNK1E activities and decreases GSK3B-induced beta-catenin serine and threonine phosphorylations. As to expression, secreted in blood plasma, and expressed in skeletal muscle and adipose tissue (at protein level).

The protein resides in the cytoplasm. The protein localises to the membrane. It localises to the secreted. Functionally, acts as a positive regulator in the activation of the canonical Wnt/beta-catenin signaling pathway by stabilizing cytoplasmic beta-catenin. Involved in transcription activation of Wnt target gene expression. Plays a role in symmetric division of blastomeres in the early stages of embryogenesis via regulation of mitotic spindle central positioning and organization of the F-actin filament network. Plays a role in regulating the distribution of cellular organelles, via modulation of cytoskeletal dynamics and cytoplasmic lattice formation. The sequence is that of Zinc finger BED domain-containing protein 3 (ZBED3) from Homo sapiens (Human).